Consider the following 434-residue polypeptide: Histidinol dehydrogenase (434 aa).

The NAD(+) site is built by Y130, Q192, and N215. Residues S238, Q260, and H263 each contribute to the substrate site. The Zn(2+) site is built by Q260 and H263. Catalysis depends on proton acceptor residues E328 and H329. H329, D362, E416, and H421 together coordinate substrate. D362 contacts Zn(2+). Zn(2+) is bound at residue H421.

The protein belongs to the histidinol dehydrogenase family. The cofactor is Zn(2+).

It catalyses the reaction L-histidinol + 2 NAD(+) + H2O = L-histidine + 2 NADH + 3 H(+). Its pathway is amino-acid biosynthesis; L-histidine biosynthesis; L-histidine from 5-phospho-alpha-D-ribose 1-diphosphate: step 9/9. Functionally, catalyzes the sequential NAD-dependent oxidations of L-histidinol to L-histidinaldehyde and then to L-histidine. The chain is Histidinol dehydrogenase from Synechococcus sp. (strain ATCC 27144 / PCC 6301 / SAUG 1402/1) (Anacystis nidulans).